A 229-amino-acid polypeptide reads, in one-letter code: MDNKGWSLKGSLLFLLLLLSDLLLCKSVASLPICPSGAVNCQVSLRDLFDRAVILSHYIHNLSSEMFNEFDKRYAQGRGFITKAINSCHTSSLPTPEDKEQAQQIHHEDLLNVILRVLRSWNDPLYHLVTEVRGLHEAPDAILSRAIEIEEQNRRLLEGMEKIVHQVHPGVRENEVYSVWSGLPSLQMADEDSRLFAFYNLLHCLRRDSHKIDSYLKLLKCRIVYDSNC.

The N-terminal stretch at 1 to 30 (MDNKGWSLKGSLLFLLLLLSDLLLCKSVAS) is a signal peptide. The cysteines at positions 34 and 41 are disulfide-linked. Position 56 is a phosphoserine (serine 56). The N-linked (GlcNAc...) asparagine glycan is linked to asparagine 61. Serine 64 and serine 120 each carry phosphoserine. Intrachain disulfides connect cysteine 88/cysteine 204 and cysteine 221/cysteine 229.

This sequence belongs to the somatotropin/prolactin family. Interacts with PRLR.

The protein localises to the secreted. Prolactin acts primarily on the mammary gland by promoting lactation. This chain is Prolactin (PRL), found in Felis catus (Cat).